The chain runs to 245 residues: Orotidine 5'-phosphate decarboxylase (245 aa).

Residues D22, K44, 71 to 80, T131, R192, Q201, G221, and R222 each bind substrate; that span reads DLKFHDIPNT. K73 serves as the catalytic Proton donor.

Belongs to the OMP decarboxylase family. Type 1 subfamily. Homodimer.

It catalyses the reaction orotidine 5'-phosphate + H(+) = UMP + CO2. It functions in the pathway pyrimidine metabolism; UMP biosynthesis via de novo pathway; UMP from orotate: step 2/2. Its function is as follows. Catalyzes the decarboxylation of orotidine 5'-monophosphate (OMP) to uridine 5'-monophosphate (UMP). This Escherichia coli O139:H28 (strain E24377A / ETEC) protein is Orotidine 5'-phosphate decarboxylase.